Reading from the N-terminus, the 147-residue chain is Phospholipase A2 SSD387 (147 aa).

The N-terminal stretch at 1-19 (MSPKFLLFSIIAVWSCAAA) is a signal peptide. Residues 20 to 28 (IEALFIQPR) constitute a propeptide that is removed on maturation. Disulfide bonds link C55–C71, C70–C130, C77–C123, C86–C116, and C109–C121. Ca(2+)-binding residues include G56 and G58. H74 is a catalytic residue. A Ca(2+)-binding site is contributed by D75. D124 is a catalytic residue.

It depends on Ca(2+) as a cofactor. As to expression, expressed by the venom gland.

It localises to the secreted. The enzyme catalyses a 1,2-diacyl-sn-glycero-3-phosphocholine + H2O = a 1-acyl-sn-glycero-3-phosphocholine + a fatty acid + H(+). PLA2 catalyzes the calcium-dependent hydrolysis of the 2-acyl groups in 3-sn-phosphoglycerides. In Scolopendra dehaani (Thai centipede), this protein is Phospholipase A2 SSD387.